A 145-amino-acid polypeptide reads, in one-letter code: Ribosomal RNA large subunit methyltransferase H (145 aa).

S-adenosyl-L-methionine-binding positions include Leu64, Gly93, and Leu112–Phe117.

Belongs to the RNA methyltransferase RlmH family. As to quaternary structure, homodimer.

The protein resides in the cytoplasm. It catalyses the reaction pseudouridine(1915) in 23S rRNA + S-adenosyl-L-methionine = N(3)-methylpseudouridine(1915) in 23S rRNA + S-adenosyl-L-homocysteine + H(+). Specifically methylates the pseudouridine at position 1915 (m3Psi1915) in 23S rRNA. The sequence is that of Ribosomal RNA large subunit methyltransferase H from Prochlorococcus marinus (strain NATL2A).